Reading from the N-terminus, the 187-residue chain is UPF0301 protein HSM_1900 (187 aa).

The protein belongs to the UPF0301 (AlgH) family.

The polypeptide is UPF0301 protein HSM_1900 (Histophilus somni (strain 2336) (Haemophilus somnus)).